Reading from the N-terminus, the 210-residue chain is Glutathione S-transferase P 2 (210 aa).

The GST N-terminal domain maps to 2–81; sequence PPYTIVYFPS…HLGRSLGLYG (80 aa). Residues Y8, R14, W39, K45, 52 to 53, and 65 to 66 contribute to the glutathione site; these read QL and QS. In terms of domain architecture, GST C-terminal spans 83–204; that stretch reads NQREAAQVDM…SSPEHVNRPI (122 aa).

The protein belongs to the GST superfamily. Pi family. As to quaternary structure, homodimer. As to expression, selectively expressed in gall bladder, colon, heart, and skeletal muscle.

It carries out the reaction RX + glutathione = an S-substituted glutathione + a halide anion + H(+). Functionally, conjugation of reduced glutathione to a wide number of exogenous and endogenous hydrophobic electrophiles. Cannot metabolize 1-chloro-2,4-dinitrobenzene. This is Glutathione S-transferase P 2 (Gstp2) from Mus musculus (Mouse).